The sequence spans 377 residues: Chaperone protein DnaJ (377 aa).

The J domain occupies 5–70 (DYYEVLGVGR…NKKAAYDQFG (66 aa)). The CR-type zinc-finger motif lies at 133-211 (GLTKELRIPT…CHGDGRVEKT (79 aa)). Residues cysteine 146, cysteine 149, cysteine 163, cysteine 166, cysteine 185, cysteine 188, cysteine 199, and cysteine 202 each contribute to the Zn(2+) site. CXXCXGXG motif repeat units follow at residues 146-153 (CDVCDGSG), 163-170 (CGTCHGQG), 185-192 (CPTCHGRG), and 199-206 (CSKCHGDG).

This sequence belongs to the DnaJ family. As to quaternary structure, homodimer. Requires Zn(2+) as cofactor.

It localises to the cytoplasm. Its function is as follows. Participates actively in the response to hyperosmotic and heat shock by preventing the aggregation of stress-denatured proteins and by disaggregating proteins, also in an autonomous, DnaK-independent fashion. Unfolded proteins bind initially to DnaJ; upon interaction with the DnaJ-bound protein, DnaK hydrolyzes its bound ATP, resulting in the formation of a stable complex. GrpE releases ADP from DnaK; ATP binding to DnaK triggers the release of the substrate protein, thus completing the reaction cycle. Several rounds of ATP-dependent interactions between DnaJ, DnaK and GrpE are required for fully efficient folding. Also involved, together with DnaK and GrpE, in the DNA replication of plasmids through activation of initiation proteins. This is Chaperone protein DnaJ from Shewanella sp. (strain ANA-3).